The following is a 147-amino-acid chain: Hordoindoline-B2 (147 aa).

The first 19 residues, 1-19 (MKTLFLLALLALVASTTSA), serve as a signal peptide directing secretion. The propeptide occupies 20 to 28 (QYSVGGGYN).

Five disulfide bonds are present. As to expression, found in endosperm and aleurone layer of developing kernels, but not in the embryo.

The protein localises to the membrane. Its subcellular location is the secreted. It localises to the extracellular space. Acts as a membranotoxin, probably through its antibacterial and antifungal activities, contributing to the defense mechanism of the plant against predators. Forms monovalent cation-selective ion channels in membranes. Contributes to grain texture and hardness. This is Hordoindoline-B2 (HINB-2) from Hordeum vulgare (Barley).